The primary structure comprises 200 residues: uncharacterized protein (200 aa).

Positions 1–21 are disordered; that stretch reads MSNSAQRDARNSRDESARASD. The segment covering 7-21 has biased composition (basic and acidic residues); the sequence is RDARNSRDESARASD.

This is an uncharacterized protein from Mycobacterium tuberculosis (strain CDC 1551 / Oshkosh).